The sequence spans 219 residues: Interleukin-12 subunit alpha (219 aa).

An N-terminal signal peptide occupies residues 1–22 (MCPARSLLLVATLVLLDYLSLA). Residues Asn-24 and Asn-93 are each glycosylated (N-linked (GlcNAc...) asparagine). 3 disulfide bridges follow: Cys-37–Cys-110, Cys-64–Cys-196, and Cys-85–Cys-123.

It belongs to the IL-6 superfamily. As to quaternary structure, heterodimer with IL12B; disulfide-linked. This heterodimer is known as interleukin IL-12. Heterodimer with EBI3/IL27B; not disulfide-linked. This heterodimer is known as interleukin IL-35. Interacts with NBR1; this interaction promotes IL-12 secretion.

The protein localises to the secreted. Its function is as follows. Heterodimerizes with IL12B to form the IL-12 cytokine or with EBI3/IL27B to form the IL-35 cytokine. IL-12 is primarily produced by professional antigen-presenting cells (APCs) such as B-cells and dendritic cells (DCs) as well as macrophages and granulocytes and regulates T-cell and natural killer-cell responses, induces the production of interferon-gamma (IFN-gamma), favors the differentiation of T-helper 1 (Th1) cells and is an important link between innate resistance and adaptive immunity. Mechanistically, exerts its biological effects through a receptor composed of IL12R1 and IL12R2 subunits. Binding to the receptor results in the rapid tyrosine phosphorylation of a number of cellular substrates including the JAK family kinases TYK2 and JAK2. In turn, recruited STAT4 gets phosphorylated and translocates to the nucleus where it regulates cytokine/growth factor responsive genes. As part of IL-35, plays essential roles in maintaining the immune homeostasis of the liver microenvironment and also functions as an immune-suppressive cytokine. Mediates biological events through unconventional receptors composed of IL12RB2 and gp130/IL6ST heterodimers or homodimers. Signaling requires the transcription factors STAT1 and STAT4, which form a unique heterodimer that binds to distinct DNA sites. In Papio anubis (Olive baboon), this protein is Interleukin-12 subunit alpha (IL12A).